A 415-amino-acid polypeptide reads, in one-letter code: Serine hydroxymethyltransferase (415 aa).

(6S)-5,6,7,8-tetrahydrofolate-binding positions include Leu117 and 121 to 123; that span reads GHL. Lys226 carries the N6-(pyridoxal phosphate)lysine modification. (6S)-5,6,7,8-tetrahydrofolate-binding positions include Glu241 and 349-351; that span reads SPF.

Belongs to the SHMT family. Homodimer. The cofactor is pyridoxal 5'-phosphate.

It is found in the cytoplasm. It carries out the reaction (6R)-5,10-methylene-5,6,7,8-tetrahydrofolate + glycine + H2O = (6S)-5,6,7,8-tetrahydrofolate + L-serine. It functions in the pathway one-carbon metabolism; tetrahydrofolate interconversion. It participates in amino-acid biosynthesis; glycine biosynthesis; glycine from L-serine: step 1/1. Functionally, catalyzes the reversible interconversion of serine and glycine with tetrahydrofolate (THF) serving as the one-carbon carrier. This reaction serves as the major source of one-carbon groups required for the biosynthesis of purines, thymidylate, methionine, and other important biomolecules. Also exhibits THF-independent aldolase activity toward beta-hydroxyamino acids, producing glycine and aldehydes, via a retro-aldol mechanism. This Geobacter sulfurreducens (strain ATCC 51573 / DSM 12127 / PCA) protein is Serine hydroxymethyltransferase.